The primary structure comprises 565 residues: Zinc finger protein 512 (565 aa).

The disordered stretch occupies residues 1–30; it reads MSSRLGAVPATSGPTTFKQQRSTRIVGAKN. Polar residues predominate over residues 12–23; that stretch reads SGPTTFKQQRST. Residues Lys18 and Lys83 each participate in a glycyl lysine isopeptide (Lys-Gly) (interchain with G-Cter in SUMO2) cross-link. A disordered region spans residues 85-147; that stretch reads AATSHVEGSG…QARRIRKEPP (63 aa). The segment covering 118–129 has biased composition (basic residues); that stretch reads KKHKLYGRKQRP. The segment at 196-219 adopts a C2H2-type 1 zinc-finger fold; the sequence is FTCHHCGKQLRSLAGMKYHVMANH. A Glycyl lysine isopeptide (Lys-Gly) (interchain with G-Cter in SUMO2) cross-link involves residue Lys226. The C2H2-type 2 zinc finger occupies 286–309; that stretch reads LKCHHCGKPYRSKAGLAYHLRSEH. Lys332 participates in a covalent cross-link: Glycyl lysine isopeptide (Lys-Gly) (interchain with G-Cter in SUMO2). The C2H2-type 3; atypical zinc finger occupies 405 to 429; it reads IQCPNQGCEAVYSSVSGLKAHLGSC. Residues 439–462 form a C2H2-type 4 zinc finger; the sequence is YKCLLCQKEFVSESGVKYHINSVH. Residues 484-493 show a composition bias toward basic and acidic residues; it reads KQRQQEEEKR. The interval 484–565 is disordered; the sequence is KQRQQEEEKR…PKTNHKRGRK (82 aa). The segment covering 494-507 has biased composition (basic residues); the sequence is RQQHRSRRSLRRRQ. Positions 522 to 531 are enriched in basic and acidic residues; that stretch reads VGKDQRRNEE. Over residues 554 to 565 the composition is skewed to basic residues; that stretch reads KPPKTNHKRGRK.

It belongs to the krueppel C2H2-type zinc-finger protein family.

It localises to the nucleus. Functionally, may be involved in transcriptional regulation. In Macaca fascicularis (Crab-eating macaque), this protein is Zinc finger protein 512 (ZNF512).